Consider the following 312-residue polypeptide: Acetaldehyde dehydrogenase 2 (312 aa).

An NAD(+)-binding site is contributed by 11-14 (SGNI). The active-site Acyl-thioester intermediate is the Cys129. NAD(+) contacts are provided by residues 160 to 168 (SAGPGTRAN) and Asn287.

The protein belongs to the acetaldehyde dehydrogenase family.

It carries out the reaction acetaldehyde + NAD(+) + CoA = acetyl-CoA + NADH + H(+). The polypeptide is Acetaldehyde dehydrogenase 2 (Novosphingobium aromaticivorans (strain ATCC 700278 / DSM 12444 / CCUG 56034 / CIP 105152 / NBRC 16084 / F199)).